Reading from the N-terminus, the 292-residue chain is Small ribosomal subunit protein uS2 (292 aa).

The disordered stretch occupies residues 230-292; the sequence is RSGGAPGSEK…KKEAGSGEEA (63 aa). 2 stretches are compositionally biased toward basic and acidic residues: residues 247–259 and 271–292; these read EWERELLEGKTEA and PAKEEKAQAPEEKKEAGSGEEA.

The protein belongs to the universal ribosomal protein uS2 family.

This chain is Small ribosomal subunit protein uS2, found in Thermobifida fusca (strain YX).